Here is a 786-residue protein sequence, read N- to C-terminus: Zinc finger transcription factor YRM1 (786 aa).

A disordered region spans residues 1 to 25 (MSKRGSLQDRASPSEETVKKAQKRR). The zn(2)-C6 fungal-type DNA-binding region spans 31–59 (CAFCRKRKLRCDQQKPMCSTCKTRGRSGC). The segment at 721–747 (PLAGNSPGLPPEEVRNNSENASHNNET) is disordered. The segment covering 737-747 (NSENASHNNET) has biased composition (polar residues).

It localises to the cytoplasm. The protein localises to the nucleus. Functionally, transcription factor involved in the regulation of multidrug resistance genes. Acts in concert with YRR1. This Saccharomyces cerevisiae (strain ATCC 204508 / S288c) (Baker's yeast) protein is Zinc finger transcription factor YRM1 (YRM1).